The sequence spans 101 residues: TrfB transcriptional repressor protein (101 aa).

The segment at residues glutamine 37–histidine 56 is a DNA-binding region (H-T-H motif).

In terms of biological role, in conjunction with KorB, inhibits the transcription of kilA, trfA and korAB operons. In conjunction with KorC is responsible for the negative control of kilC and kilE operons. The sequence is that of TrfB transcriptional repressor protein (trfB) from Escherichia coli.